An 88-amino-acid chain; its full sequence is Acylphosphatase (88 aa).

The 86-residue stretch at 3-88 (AVDVLISGRV…RAGHQGFEVR (86 aa)) folds into the Acylphosphatase-like domain. Active-site residues include Arg-18 and Asn-36.

Belongs to the acylphosphatase family.

It catalyses the reaction an acyl phosphate + H2O = a carboxylate + phosphate + H(+). The protein is Acylphosphatase (acyP) of Methanocella arvoryzae (strain DSM 22066 / NBRC 105507 / MRE50).